A 2252-amino-acid chain; its full sequence is RNA1 polyprotein (2252 aa).

Topologically, residues 565–1140 (MITTLAQSIF…QGREFIVSNG (576 aa)) are cytoplasmic. One can recognise an SF3 helicase domain in the interval 733-899 (MKDLLELQKR…PGVIFDPDNA (167 aa)). 763-770 (GPSHCGKS) contacts ATP. The chain crosses the membrane as a helical span at residues 1141 to 1161 (GGILMIAAAIILVLVCGWGFW). At 1162–1187 (KAFVGLFTGSMSLGAALAGCQEAEVK) the chain is on the lumenal side. One can recognise a Peptidase C3 domain in the interval 1213-1422 (SYARSQAGNG…WACILPNPHL (210 aa)). Residues His1256, Glu1294, and Cys1386 each act as for picornain 3C-like protease activity in the active site. Positions 1697 to 1825 (NEAINCDYSG…SVSPAVASWF (129 aa)) constitute a RdRp catalytic domain.

It belongs to the nepoviruses RNA1 polyprotein family. Post-translationally, specific enzymatic cleavages by picornain 3C-like protease in vivo yield mature proteins. Picornain 3C-like protease is autocatalytically processed. In terms of processing, VPg is uridylylated by the polymerase and is covalently linked to the 5'-end of genomic RNA. This uridylylated form acts as a nucleotide-peptide primer for the polymerase.

It localises to the host endoplasmic reticulum lumen. It is found in the host endoplasmic reticulum membrane. It catalyses the reaction RNA(n) + a ribonucleoside 5'-triphosphate = RNA(n+1) + diphosphate. Picornain 3C-like protease is a thiol protease that cleaves the P1 and P2 polyproteins. The chain is RNA1 polyprotein from Apium graveolens (Celery).